A 412-amino-acid chain; its full sequence is CapZ-interacting protein (412 aa).

Disordered regions lie at residues M1–P84 and A99–M412. The span at E7–V20 shows a compositional bias: polar residues. Phosphoserine occurs at positions 68, 82, 83, 105, 108, 116, 120, and 123. T124 bears the Phosphothreonine mark. Residues S126, S127, S135, and S143 each carry the phosphoserine modification. The span at V159–R176 shows a compositional bias: basic residues. S177, S179, and S216 each carry phosphoserine. Phosphothreonine occurs at positions 243 and 256. Basic and acidic residues predominate over residues E248–E258. The residue at position 297 (S297) is a Phosphoserine. Basic and acidic residues-rich tracts occupy residues P298–K312 and S319–G330. A phosphoserine mark is found at S333 and S401.

Interacts with CAPZA2 and CAPZB. Post-translationally, dephosphorylation results in its dissociation from CAPZA2.

In terms of biological role, stress-induced phosphorylation of CAPZIP may regulate the ability of F-actin-capping protein to remodel actin filament assembly. The protein is CapZ-interacting protein (Rcsd1) of Mus musculus (Mouse).